The following is a 108-amino-acid chain: Nucleoid-associated protein Bphy_0952 (108 aa).

The interval 87–108 (AQEKMGGMTSGLPLPPGFKLPF) is disordered. Positions 99-108 (PLPPGFKLPF) are enriched in pro residues.

Belongs to the YbaB/EbfC family. In terms of assembly, homodimer.

Its subcellular location is the cytoplasm. The protein resides in the nucleoid. Functionally, binds to DNA and alters its conformation. May be involved in regulation of gene expression, nucleoid organization and DNA protection. The chain is Nucleoid-associated protein Bphy_0952 from Paraburkholderia phymatum (strain DSM 17167 / CIP 108236 / LMG 21445 / STM815) (Burkholderia phymatum).